Consider the following 424-residue polypeptide: UDP-N-acetylglucosamine 1-carboxyvinyltransferase (424 aa).

Phosphoenolpyruvate is bound at residue 22–23 (KN). Position 93 (Arg93) interacts with UDP-N-acetyl-alpha-D-glucosamine. Cys117 functions as the Proton donor in the catalytic mechanism. Cys117 carries the post-translational modification 2-(S-cysteinyl)pyruvic acid O-phosphothioketal. UDP-N-acetyl-alpha-D-glucosamine contacts are provided by residues 162–165 (KVSV), Asp307, and Ile329.

This sequence belongs to the EPSP synthase family. MurA subfamily.

The protein resides in the cytoplasm. It carries out the reaction phosphoenolpyruvate + UDP-N-acetyl-alpha-D-glucosamine = UDP-N-acetyl-3-O-(1-carboxyvinyl)-alpha-D-glucosamine + phosphate. It functions in the pathway cell wall biogenesis; peptidoglycan biosynthesis. Cell wall formation. Adds enolpyruvyl to UDP-N-acetylglucosamine. This chain is UDP-N-acetylglucosamine 1-carboxyvinyltransferase, found in Actinobacillus pleuropneumoniae serotype 3 (strain JL03).